The sequence spans 89 residues: uncharacterized protein (89 aa).

This is an uncharacterized protein from Geobacillus stearothermophilus (Bacillus stearothermophilus).